An 808-amino-acid polypeptide reads, in one-letter code: Probable inorganic carbon transporter subunit DabA (808 aa).

The Zn(2+) site is built by Cys335, Asp337, His497, and Cys512.

Belongs to the inorganic carbon transporter (TC 9.A.2) DabA family. In terms of assembly, forms a complex with DabB. Requires Zn(2+) as cofactor.

Its subcellular location is the cell inner membrane. Its function is as follows. Part of an energy-coupled inorganic carbon pump. The chain is Probable inorganic carbon transporter subunit DabA from Rhodopseudomonas palustris (strain TIE-1).